Reading from the N-terminus, the 396-residue chain is Pre-mRNA-splicing regulator WTAP (396 aa).

Met1 is modified (N-acetylmethionine). A Phosphoserine modification is found at Ser14. Low complexity-rich tracts occupy residues 240 to 257, 278 to 291, and 304 to 316; these read QQQQ…TTAS, SNGS…SGSG, and PSSP…SSNS. The tract at residues 240–396 is disordered; it reads QQQQSQASAP…SSVNVQGSVL (157 aa). Phosphoserine occurs at positions 305, 306, and 341. Polar residues predominate over residues 340–356; it reads DSPTGSENSLTHQSNDT. Thr350 carries the phosphothreonine modification. Positions 357–368 are enriched in basic and acidic residues; it reads DSSHDPQEEKAV. The span at 380–396 shows a compositional bias: polar residues; sequence HVQNGLDSSVNVQGSVL. The residue at position 388 (Ser388) is a Phosphoserine.

The protein belongs to the fl(2)d family. In terms of assembly, component of the WMM complex, a N6-methyltransferase complex composed of a catalytic subcomplex, named MAC, and of an associated subcomplex, named MACOM. The MAC subcomplex is composed of METTL3 and METTL14. The MACOM subcomplex is composed of WTAP, ZC3H13, CBLL1/HAKAI, VIRMA, and, in some cases of RBM15 (RBM15 or RBM15B). Interacts with WT1. Also a component of a MACOM-like complex, named WTAP complex, composed of WTAP, ZC3H13, CBLL1, VIRMA, RBM15, BCLAF1 and THRAP3. Ubiquitously expressed.

The protein resides in the nucleus speckle. Its subcellular location is the nucleus. It localises to the nucleoplasm. It is found in the cytoplasm. Associated component of the WMM complex, a complex that mediates N6-methyladenosine (m6A) methylation of RNAs, a modification that plays a role in the efficiency of mRNA splicing and RNA processing. Required for accumulation of METTL3 and METTL14 to nuclear speckle. Acts as a mRNA splicing regulator. Regulates G2/M cell-cycle transition by binding to the 3' UTR of CCNA2, which enhances its stability. Impairs WT1 DNA-binding ability and inhibits expression of WT1 target genes. The chain is Pre-mRNA-splicing regulator WTAP from Homo sapiens (Human).